We begin with the raw amino-acid sequence, 281 residues long: NADPH-dependent 7-cyano-7-deazaguanine reductase (281 aa).

A substrate-binding site is contributed by Ile-87–Ser-89. Ser-89 to Lys-90 lines the NADPH pocket. The active-site Thioimide intermediate is Cys-188. Asp-195 serves as the catalytic Proton donor. His-227 to Glu-228 lines the substrate pocket. Residue Arg-256–Gly-257 participates in NADPH binding. The interval Ile-261–Gln-281 is disordered.

It belongs to the GTP cyclohydrolase I family. QueF type 2 subfamily. As to quaternary structure, homodimer.

It is found in the cytoplasm. It carries out the reaction 7-aminomethyl-7-carbaguanine + 2 NADP(+) = 7-cyano-7-deazaguanine + 2 NADPH + 3 H(+). Its pathway is tRNA modification; tRNA-queuosine biosynthesis. Functionally, catalyzes the NADPH-dependent reduction of 7-cyano-7-deazaguanine (preQ0) to 7-aminomethyl-7-deazaguanine (preQ1). The polypeptide is NADPH-dependent 7-cyano-7-deazaguanine reductase (Vibrio parahaemolyticus serotype O3:K6 (strain RIMD 2210633)).